Reading from the N-terminus, the 235-residue chain is N-alpha-acetyltransferase 10 (235 aa).

Position 1 is an N-acetylmethionine (M1). The interval 1–58 (MNIRNARPEDLMNMQHCNLLCLPENYQMKYYFYHGLSWPQLSYIAEDENGKIVGYVLA) is interaction with NAA15. An N-acetyltransferase domain is found at 1 to 152 (MNIRNARPED…DAYAMKRDLT (152 aa)). Position 136 is an N6-acetyllysine; by autocatalysis (K136). The interval 178–235 (NKVESKGNSPPSSGEACREEKGLAAEDSGGDSKDLSEVSETTESTDVKDSSEASDSAS) is disordered. Phosphoserine is present on residues S182, S186, and S205. Residues 193 to 213 (ACREEKGLAAEDSGGDSKDLS) are compositionally biased toward basic and acidic residues. S209 is subject to Phosphoserine; by IKKB. Phosphoserine is present on residues S213 and S216.

The protein belongs to the acetyltransferase family. ARD1 subfamily. In terms of assembly, component of the N-terminal acetyltransferase A complex (also called the NatA complex) composed of NAA10 and NAA15. Within the complex interacts with NAA15. Component of the N-terminal acetyltransferase A (NatA)/HYPK complex at least composed of NAA10, NAA15 and HYPK, which has N-terminal acetyltransferase activity. In complex with NAA15, interacts with HYPK. Component of the N-terminal acetyltransferase E (NatE) complex at least composed of NAA10, NAA15 and NAA50. Within the complex interacts with NAA15; the interaction is required for binding to NAAT50. Interacts with NAAT50. The interaction of the NatA complex with NAA50 reduces the acetylation activity of the NatA complex. Component of the N-terminal acetyltransferase E (NatE)/HYPK complex at least composed of NAA10, NAA15, NAA50 and HYPK. In complex with NAA15, interacts with HYPK; the interaction with HYPK reduces the capacity of the NatA complex to interact with NAA50. Interacts with HIF1A (via its ODD domain); the interaction increases HIF1A protein stability during normoxia, an down-regulates it when induced by hypoxia. Interacts with the ribosome. Binds to MYLK. Interacts with NAA16. Interacts (via its C-terminal domain) with TSC2, leading to its acetylation. Interacts with IKBKB. Interacts with HSPA1A and HSPA1B leading to its acetylation. Post-translationally, cleaved by caspases during apoptosis. In terms of processing, phosphorylation by IKBKB/IKKB at Ser-209 promotes its proteasome-mediated degradation. Autoacetylated at Lys-136 which stimulates its catalytic activity. Ubiquitous.

The protein localises to the cytoplasm. Its subcellular location is the nucleus. It catalyses the reaction N-terminal glycyl-[protein] + acetyl-CoA = N-terminal N(alpha)-acetylglycyl-[protein] + CoA + H(+). It carries out the reaction N-terminal L-alanyl-[protein] + acetyl-CoA = N-terminal N(alpha)-acetyl-L-alanyl-[protein] + CoA + H(+). The catalysed reaction is N-terminal L-seryl-[protein] + acetyl-CoA = N-terminal N(alpha)-acetyl-L-seryl-[protein] + CoA + H(+). The enzyme catalyses N-terminal L-valyl-[protein] + acetyl-CoA = N-terminal N(alpha)-acetyl-L-valyl-[protein] + CoA + H(+). It catalyses the reaction N-terminal L-cysteinyl-[protein] + acetyl-CoA = N-terminal N(alpha)-acetyl-L-cysteinyl-[protein] + CoA + H(+). It carries out the reaction N-terminal L-threonyl-[protein] + acetyl-CoA = N-terminal N(alpha)-acetyl-L-threonyl-[protein] + CoA + H(+). Its function is as follows. Catalytic subunit of N-terminal acetyltransferase complexes which display alpha (N-terminal) acetyltransferase activity. Acetylates amino termini that are devoid of initiator methionine. The alpha (N-terminal) acetyltransferase activity may be important for vascular, hematopoietic and neuronal growth and development. Without NAA15, displays epsilon (internal) acetyltransferase activity towards HIF1A, thereby promoting its degradation. Represses MYLK kinase activity by acetylation, and thus represses tumor cell migration. Acetylates, and stabilizes TSC2, thereby repressing mTOR activity and suppressing cancer development. Acetylates HSPA1A and HSPA1B at 'Lys-77' which enhances its chaperone activity and leads to preferential binding to co-chaperone HOPX. Acetylates HIST1H4A. Acts as a negative regulator of sister chromatid cohesion during mitosis. This chain is N-alpha-acetyltransferase 10 (NAA10), found in Homo sapiens (Human).